The chain runs to 101 residues: DET1- and DDB1-associated protein 1 (101 aa).

Residues 67-101 form a disordered region; it reads NAAKKRDQDQLEIGETSAPPRKIARTDSQEMSEDT.

Belongs to the DDA1 family. As to quaternary structure, component of numerous DCX (DDB1-CUL4-X-box) E3 ubiquitin-protein ligase complexes which consist of a core of DDB1, cullin-4 (CUL4A or CUL4B), DDA1 and RBX1.

The protein operates within protein modification; protein ubiquitination. Functions as a component of numerous distinct DCX (DDB1-CUL4-X-box) E3 ubiquitin-protein ligase complexes which mediate the ubiquitination and subsequent proteasomal degradation of target proteins. In the DCX complexes, acts as a scaffolding subunit required to stabilize the complex. This Xenopus tropicalis (Western clawed frog) protein is DET1- and DDB1-associated protein 1.